The chain runs to 417 residues: Glutamyl-tRNA reductase (417 aa).

Residues 49–52 (TCNR), S109, 114–116 (ESQ), and Q120 contribute to the substrate site. C50 acts as the Nucleophile in catalysis. 189-194 (GLGEIG) provides a ligand contact to NADP(+).

The protein belongs to the glutamyl-tRNA reductase family. Homodimer.

The catalysed reaction is (S)-4-amino-5-oxopentanoate + tRNA(Glu) + NADP(+) = L-glutamyl-tRNA(Glu) + NADPH + H(+). The protein operates within porphyrin-containing compound metabolism; protoporphyrin-IX biosynthesis; 5-aminolevulinate from L-glutamyl-tRNA(Glu): step 1/2. Catalyzes the NADPH-dependent reduction of glutamyl-tRNA(Glu) to glutamate 1-semialdehyde (GSA). This chain is Glutamyl-tRNA reductase, found in Streptococcus sanguinis (strain SK36).